Consider the following 183-residue polypeptide: Ribulose bisphosphate carboxylase small subunit, chloroplastic (183 aa).

The N-terminal 58 residues, 1-58, are a transit peptide targeting the chloroplast; that stretch reads MASSMLSTAAVACINRASPAQASMVAPFTGLKSTSAFPTTRKTTTDITSIASNGGRVQ.

This sequence belongs to the RuBisCO small chain family. Heterohexadecamer of 8 large and 8 small subunits.

It localises to the plastid. The protein resides in the chloroplast. RuBisCO catalyzes two reactions: the carboxylation of D-ribulose 1,5-bisphosphate, the primary event in carbon dioxide fixation, as well as the oxidative fragmentation of the pentose substrate. Both reactions occur simultaneously and in competition at the same active site. Although the small subunit is not catalytic it is essential for maximal activity. The sequence is that of Ribulose bisphosphate carboxylase small subunit, chloroplastic from Hevea brasiliensis (Para rubber tree).